The sequence spans 217 residues: Adenylate kinase (217 aa).

11–16 (GAGKGT) serves as a coordination point for ATP. Positions 31 to 60 (STGDMFREAMANKTPVGLEAKSYIDKGDLV) are NMP. Residues threonine 32, arginine 37, 58–60 (DLV), 86–89 (GFPR), and glutamine 93 each bind AMP. Residues 127-165 (ARFMCKNCGATYNKFSKKPKVEGTCDRCGGHEFYQREDD) are LID. ATP is bound at residue arginine 128. Zn(2+)-binding residues include cysteine 131 and cysteine 134. 137–138 (TY) serves as a coordination point for ATP. Residues cysteine 151 and cysteine 154 each coordinate Zn(2+). Positions 162 and 173 each coordinate AMP. Glutamine 201 is a binding site for ATP.

The protein belongs to the adenylate kinase family. Monomer.

It is found in the cytoplasm. It catalyses the reaction AMP + ATP = 2 ADP. Its pathway is purine metabolism; AMP biosynthesis via salvage pathway; AMP from ADP: step 1/1. In terms of biological role, catalyzes the reversible transfer of the terminal phosphate group between ATP and AMP. Plays an important role in cellular energy homeostasis and in adenine nucleotide metabolism. This chain is Adenylate kinase, found in Lactobacillus delbrueckii subsp. bulgaricus (strain ATCC 11842 / DSM 20081 / BCRC 10696 / JCM 1002 / NBRC 13953 / NCIMB 11778 / NCTC 12712 / WDCM 00102 / Lb 14).